We begin with the raw amino-acid sequence, 409 residues long: Glutamyl-tRNA reductase (409 aa).

Substrate is bound by residues 48-51, S89, 94-96, and Q100; these read TCNR and ENE. Residue C49 is the Nucleophile of the active site. 165–170 contributes to the NADP(+) binding site; sequence GNGMLA.

Belongs to the glutamyl-tRNA reductase family. In terms of assembly, homodimer.

The catalysed reaction is (S)-4-amino-5-oxopentanoate + tRNA(Glu) + NADP(+) = L-glutamyl-tRNA(Glu) + NADPH + H(+). It participates in porphyrin-containing compound metabolism; protoporphyrin-IX biosynthesis; 5-aminolevulinate from L-glutamyl-tRNA(Glu): step 1/2. In terms of biological role, catalyzes the NADPH-dependent reduction of glutamyl-tRNA(Glu) to glutamate 1-semialdehyde (GSA). This chain is Glutamyl-tRNA reductase, found in Thermoplasma volcanium (strain ATCC 51530 / DSM 4299 / JCM 9571 / NBRC 15438 / GSS1).